The chain runs to 462 residues: Malonyl-coenzyme:anthocyanin 5-O-glucoside-6'''-O-malonyltransferase (462 aa).

Active-site proton acceptor residues include His167 and Asp390.

This sequence belongs to the plant acyltransferase family. In terms of tissue distribution, detected in petals and sepals, and at lower levels in bracts and red stems.

The catalysed reaction is pelargonidin 3-O-(6-O-[(E)-caffeoyl]-beta-D-glucoside) 5-O-beta-D-glucoside + malonyl-CoA = 4'''-demalonylsalvianin + CoA. It functions in the pathway pigment biosynthesis; anthocyanin biosynthesis. Its activity is regulated as follows. Completely inhibited by 10 mM p-coumaric acid, this inhibition is rapid, reversible and non-competitive. Completely inhibited by 0.1 mM Cu(2+), 0.1 mM Hg(2+) and 10 mM caffeic acid. Partially inhibited by 5 mM N-ethylmaleimide, 1 mM diethylpyrocarbonate and 1 mM acetyl-CoA. Catalyzes the transfer of a malonyl group from malonyl-CoA to the 6'''-hydroxyl group of the 5-glucosyl moiety of anthocyanins. Active towards bisdemalonylsalvianin (pelargonidin 3-O-(6-caffeoyl-beta-D-glucoside) 5-O-beta-D-glucoside) and shisonin, but not towards nodemalonylsalvianin, salvianin, pelargonidin 3,5-diglucoside and delphinidin 3,5-diglucoside. This Salvia splendens (Scarlet sage) protein is Malonyl-coenzyme:anthocyanin 5-O-glucoside-6'''-O-malonyltransferase.